The chain runs to 392 residues: GDP-mannose transporter (392 aa).

The interval 1–40 is disordered; it reads MANKRNEDIELGPAEGRGSTDKDPFLARRSSSQPNRPQQA. At 1–55 the chain is on the cytoplasmic side; sequence MANKRNEDIELGPAEGRGSTDKDPFLARRSSSQPNRPQQAGPFGGYFDKIDHSPG. The segment covering 29–38 has biased composition (polar residues); it reads RSSSQPNRPQ. A helical membrane pass occupies residues 56 to 76; it reads ASIIAYCLSSISMTVVNKYVV. The Lumenal portion of the chain corresponds to 77–80; that stretch reads SGSE. The helical transmembrane segment at 81 to 101 threads the bilayer; it reads WNLNFFYLAVQSLVCTAAILI. At 102–121 the chain is on the cytoplasmic side; that stretch reads CKQLGMFQNLAAFDSTKAKK. Residues 122-144 form a helical membrane-spanning segment; the sequence is WFPISLLLVGMIYTSTKALQFLS. Residues 145 to 149 lie on the Lumenal side of the membrane; sequence VPVYT. A helical transmembrane segment spans residues 150–168; it reads IFKNLTIIVVAYGEVLWFG. The Cytoplasmic portion of the chain corresponds to 169–174; the sequence is GSVTPM. A helical membrane pass occupies residues 175–198; it reads ALLSFGLMVLSSVIAAWADIQAAV. Topologically, residues 199-213 are lumenal; sequence EGVGHTAEATDAIST. A helical transmembrane segment spans residues 214–234; sequence LNAGYAWMGMNVFCTAAYLLG. Over 235-248 the chain is Cytoplasmic; the sequence is MRKVIKKMNFKDYD. A helical membrane pass occupies residues 249–269; the sequence is TMFYNNLLTIPVLIVFSLLFE. Residues 270–287 are Lumenal-facing; it reads DWSNDNLIKNFPVETRNS. A helical membrane pass occupies residues 288–308; the sequence is LFIGMIYSGLAAIFISYCSAW. Residues 309–316 are Cytoplasmic-facing; it reads CIRVTSST. A helical membrane pass occupies residues 317–337; sequence TYSMVGALNKLPLAISGLIFF. Topologically, residues 338–342 are lumenal; the sequence is DAPVT. The chain crosses the membrane as a helical span at residues 343–361; the sequence is FGSVTAIFVGFVSGLVYTW. At 362–392 the chain is on the cytoplasmic side; sequence SKTRQKVSQILPTTQPTMSASAASNRDAANA.

This sequence belongs to the TPT transporter family. SLC35D subfamily. Homooligomer.

The protein localises to the golgi apparatus membrane. Its subcellular location is the cytoplasmic vesicle membrane. It localises to the endoplasmic reticulum membrane. Its function is as follows. Involved in the import of GDP-mannose from the cytoplasm into the Golgi lumen. The protein is GDP-mannose transporter (vrg-4) of Neurospora crassa (strain ATCC 24698 / 74-OR23-1A / CBS 708.71 / DSM 1257 / FGSC 987).